Here is a 660-residue protein sequence, read N- to C-terminus: tRNA 5-methylaminomethyl-2-thiouridine biosynthesis bifunctional protein MnmC (660 aa).

The tRNA (mnm(5)s(2)U34)-methyltransferase stretch occupies residues Met1–Ala242. The FAD-dependent cmnm(5)s(2)U34 oxidoreductase stretch occupies residues Ile266–Ala660.

This sequence in the N-terminal section; belongs to the methyltransferase superfamily. tRNA (mnm(5)s(2)U34)-methyltransferase family. In the C-terminal section; belongs to the DAO family. FAD serves as cofactor.

It is found in the cytoplasm. It carries out the reaction 5-aminomethyl-2-thiouridine(34) in tRNA + S-adenosyl-L-methionine = 5-methylaminomethyl-2-thiouridine(34) in tRNA + S-adenosyl-L-homocysteine + H(+). Functionally, catalyzes the last two steps in the biosynthesis of 5-methylaminomethyl-2-thiouridine (mnm(5)s(2)U) at the wobble position (U34) in tRNA. Catalyzes the FAD-dependent demodification of cmnm(5)s(2)U34 to nm(5)s(2)U34, followed by the transfer of a methyl group from S-adenosyl-L-methionine to nm(5)s(2)U34, to form mnm(5)s(2)U34. In Burkholderia pseudomallei (strain 1106a), this protein is tRNA 5-methylaminomethyl-2-thiouridine biosynthesis bifunctional protein MnmC.